Consider the following 113-residue polypeptide: UPF0482 protein KPK_2871 (113 aa).

An N-terminal signal peptide occupies residues M1–A28. Residues G38–R61 form a disordered region. Over residues D39 to S48 the composition is skewed to polar residues. The segment covering M49–S59 has biased composition (basic and acidic residues).

The protein belongs to the UPF0482 family.

This is UPF0482 protein KPK_2871 from Klebsiella pneumoniae (strain 342).